Here is a 71-residue protein sequence, read N- to C-terminus: uncharacterized protein (71 aa).

The region spanning Ile5–Ile59 is the HTH cro/C1-type domain. Positions Gln16–Lys35 form a DNA-binding region, H-T-H motif.

This is an uncharacterized protein from Archaeoglobus fulgidus (strain ATCC 49558 / DSM 4304 / JCM 9628 / NBRC 100126 / VC-16).